Here is a 166-residue protein sequence, read N- to C-terminus: Sec-independent protein translocase protein TatB (166 aa).

Residues 1 to 21 form a helical membrane-spanning segment; sequence MIDIAFSKLAIIGVAALVFIG. Residues 85-146 form a disordered region; the sequence is DSSLHSAWDE…SGQKSRVISG (62 aa).

The protein belongs to the TatB family. In terms of assembly, the Tat system comprises two distinct complexes: a TatABC complex, containing multiple copies of TatA, TatB and TatC subunits, and a separate TatA complex, containing only TatA subunits. Substrates initially bind to the TatABC complex, which probably triggers association of the separate TatA complex to form the active translocon.

The protein resides in the cell inner membrane. Its function is as follows. Part of the twin-arginine translocation (Tat) system that transports large folded proteins containing a characteristic twin-arginine motif in their signal peptide across membranes. Together with TatC, TatB is part of a receptor directly interacting with Tat signal peptides. TatB may form an oligomeric binding site that transiently accommodates folded Tat precursor proteins before their translocation. This is Sec-independent protein translocase protein TatB from Herminiimonas arsenicoxydans.